The chain runs to 79 residues: Anti-insect Ac4 (79 aa).

Positions 1–17 (MISLSLLLMIGVESVRD) are cleaved as a signal peptide. The LCN-type CS-alpha/beta domain occupies 18 to 77 (GYIVDFKNCVYRCVPPCDGLCKKNGGKGGSCSFLIGSGLACWCNALPDNVPIKDPLHKCP). Cystine bridges form between C26–C76, C30–C48, C34–C58, and C38–C60.

Belongs to the long (4 C-C) scorpion toxin superfamily. Sodium channel inhibitor family. Alpha subfamily. As to expression, expressed by the venom gland.

It is found in the secreted. In terms of biological role, alpha toxins bind voltage-independently at site-3 of sodium channels (Nav) and inhibit the inactivation of the activated channels, thereby blocking neuronal transmission. This protein is weakly toxic against insects (ED(50)&gt;2 ug per 100 mg of blowfly larvae), but is inactive against mammalian sodium channels (rNav1.2a, and rNav1.4). This is Anti-insect Ac4 from Androctonus crassicauda (Arabian fat-tailed scorpion).